Here is a 331-residue protein sequence, read N- to C-terminus: uncharacterized protein (331 aa).

WD repeat units follow at residues 53–92, 97–139, 144–184, and 300–331; these read KAHT…KSAV, QQST…KLIR, AHND…DSTD, and ASEE…AFRV.

The protein resides in the cytoplasm. It is found in the nucleus. This is an uncharacterized protein from Schizosaccharomyces pombe (strain 972 / ATCC 24843) (Fission yeast).